The chain runs to 343 residues: 4-hydroxy-2-oxovalerate aldolase (343 aa).

In terms of domain architecture, Pyruvate carboxyltransferase spans 4–254; sequence PRLTDTTLRD…NPGLDVFGLM (251 aa). 12-13 provides a ligand contact to substrate; sequence RD. Mn(2+) is bound at residue Asp-13. The active-site Proton acceptor is the His-16. Substrate contacts are provided by Ser-166 and His-193. His-193 and His-195 together coordinate Mn(2+). Residue Tyr-284 coordinates substrate.

It belongs to the 4-hydroxy-2-oxovalerate aldolase family.

The enzyme catalyses (S)-4-hydroxy-2-oxopentanoate = acetaldehyde + pyruvate. This chain is 4-hydroxy-2-oxovalerate aldolase, found in Chloroflexus aggregans (strain MD-66 / DSM 9485).